We begin with the raw amino-acid sequence, 194 residues long: ATP-dependent Clp protease proteolytic subunit (194 aa).

Ser98 acts as the Nucleophile in catalysis. His123 is a catalytic residue.

The protein belongs to the peptidase S14 family. In terms of assembly, fourteen ClpP subunits assemble into 2 heptameric rings which stack back to back to give a disk-like structure with a central cavity, resembling the structure of eukaryotic proteasomes.

The protein localises to the cytoplasm. The enzyme catalyses Hydrolysis of proteins to small peptides in the presence of ATP and magnesium. alpha-casein is the usual test substrate. In the absence of ATP, only oligopeptides shorter than five residues are hydrolyzed (such as succinyl-Leu-Tyr-|-NHMec, and Leu-Tyr-Leu-|-Tyr-Trp, in which cleavage of the -Tyr-|-Leu- and -Tyr-|-Trp bonds also occurs).. Cleaves peptides in various proteins in a process that requires ATP hydrolysis. Has a chymotrypsin-like activity. Plays a major role in the degradation of misfolded proteins. This is ATP-dependent Clp protease proteolytic subunit from Syntrophus aciditrophicus (strain SB).